Reading from the N-terminus, the 205-residue chain is Guanylate kinase (205 aa).

The 179-residue stretch at 5 to 183 (GTLYTVSAPS…ALTEFRSIVV (179 aa)) folds into the Guanylate kinase-like domain. 12–19 (APSGAGKT) is a binding site for ATP.

This sequence belongs to the guanylate kinase family.

It is found in the cytoplasm. The catalysed reaction is GMP + ATP = GDP + ADP. In terms of biological role, essential for recycling GMP and indirectly, cGMP. This is Guanylate kinase from Saccharophagus degradans (strain 2-40 / ATCC 43961 / DSM 17024).